We begin with the raw amino-acid sequence, 496 residues long: MNIPFVVETVLHDGLLKYKFKNSKIRSITTKPGKSKGAIFAYRSKKSMIGGRGVVLTSEEAIHENQDTFTHWTPNVYRYGTYADENRSYTKGHSENNLRQINTFFIDFDIHTEKETISASDILTTAIDLGFMPTLIIKSDKGYQAYFVLETPVYVTSKSEFKSVKAAKIISQNIREYFGKSLPVDLTCNHFGIARIPRTDNVEFFDPNYRYSFKEWQDWSFKQTDNKGFTRSSLTVLSGTEGKKQVDEPWFNLLLHETKFSGEKGLVGRNSVMFTLSLAYFSSGYSIETCEYNMFEFNNRLDQPLEEKEVIKIVRSAYSENYQGANREYITILCKAWVSSDLTSKDLFVRQGWFKFKKKRSERQRVHLSEWKEDLMAYISEKSDVYKPYLATTKKEIREVLGIPERTLDKLLKVLKANQEIFFKIKPGRNGGIQLASVKSLLLSIIKLKKEERESYIKALTASFNLERTFIQETLNKLAERPKTDPQLDLFSYDTG.

A DNA-binding region spans residues 120 to 141 (SDILTTAIDLGFMPTLIIKSDK).

In terms of biological role, essential for replication. The sequence is that of Protein RepR (repR) from Streptococcus agalactiae.